A 563-amino-acid chain; its full sequence is Rab escort protein 1 (563 aa).

Residues 538–563 (ELFKEETSPAENTTEEENDGGVEIED) form a disordered region. Residues 550-563 (TTEEENDGGVEIED) are compositionally biased toward acidic residues.

This sequence belongs to the Rab GDI family. In terms of assembly, heterotrimer composed of the alpha subunit RGTA, the beta subunit RGTB and REP; within this trimer, RGTA and RGTB form the catalytic component, while REP mediates peptide substrate binding. Expressed in roots, leaves and flowers.

The protein resides in the cytoplasm. Substrate-binding subunit of the Rab geranylgeranyltransferase (GGTase) complex. Binds unprenylated Rab proteins and presents the substrate peptide to the catalytic component composed of the alpha subunit RGTA and the beta subunit RGTB. Preferentially binds the GDP-bound form of Rab and stimulates geranylgeranylation of various Rab GTPases in vitro. This Arabidopsis thaliana (Mouse-ear cress) protein is Rab escort protein 1.